A 232-amino-acid chain; its full sequence is Phosphatidylserine decarboxylase proenzyme (232 aa).

Ser-190 serves as the catalytic Schiff-base intermediate with substrate; via pyruvic acid. Residue Ser-190 is modified to Pyruvic acid (Ser); by autocatalysis.

This sequence belongs to the phosphatidylserine decarboxylase family. PSD-A subfamily. Heterodimer of a large membrane-associated beta subunit and a small pyruvoyl-containing alpha subunit. The cofactor is pyruvate. Post-translationally, is synthesized initially as an inactive proenzyme. Formation of the active enzyme involves a self-maturation process in which the active site pyruvoyl group is generated from an internal serine residue via an autocatalytic post-translational modification. Two non-identical subunits are generated from the proenzyme in this reaction, and the pyruvate is formed at the N-terminus of the alpha chain, which is derived from the carboxyl end of the proenzyme. The post-translation cleavage follows an unusual pathway, termed non-hydrolytic serinolysis, in which the side chain hydroxyl group of the serine supplies its oxygen atom to form the C-terminus of the beta chain, while the remainder of the serine residue undergoes an oxidative deamination to produce ammonia and the pyruvoyl prosthetic group on the alpha chain.

The protein localises to the cell membrane. It catalyses the reaction a 1,2-diacyl-sn-glycero-3-phospho-L-serine + H(+) = a 1,2-diacyl-sn-glycero-3-phosphoethanolamine + CO2. It participates in phospholipid metabolism; phosphatidylethanolamine biosynthesis; phosphatidylethanolamine from CDP-diacylglycerol: step 2/2. Catalyzes the formation of phosphatidylethanolamine (PtdEtn) from phosphatidylserine (PtdSer). This chain is Phosphatidylserine decarboxylase proenzyme, found in Sinorhizobium medicae (strain WSM419) (Ensifer medicae).